We begin with the raw amino-acid sequence, 247 residues long: Dynein axonemal assembly factor 19 (247 aa).

Residues 12 to 32 (LEKELHSALQADRKYQRENDA) adopt a coiled-coil conformation.

Belongs to the DNAAF19/PR46b family. Homodimer. Expressed in all cells bearing motile cilia.

Its subcellular location is the cytoplasm. The protein resides in the cell projection. It localises to the cilium. The protein localises to the flagellum. Dynein-attachment factor required for cilia motility. The sequence is that of Dynein axonemal assembly factor 19 (dnaaf19) from Danio rerio (Zebrafish).